Here is a 299-residue protein sequence, read N- to C-terminus: MIRRQKYGDEIAKAQVLIEALPYIKKFSGKTVVIKYGGSAMLDCNLKRMVMQDIVLMKFVGLNPIVVHGGGPEINKMLERLGIESKFVNGLRVTDEATMEIVEMVLTGRINKEIVSLINELGGQAIGVSGKDGRLLKAEKDTSNGDIGYVGKIVDVNIDVITMMLEKGYIPVIAPTSFGDDGKTYNVNADTAAGKIAEALKAEKLILLTDVEGILSNINDKSSLISRMDLEHAKEFMNSGRINGGMIPKLECCIKAVENGVKRAHIIDGRLTHSLLLEIFTDEGIGTMIGKECFDDDNL.

Substrate is bound by residues 70-71, Arg-92, and Asn-186; that span reads GG.

Belongs to the acetylglutamate kinase family. ArgB subfamily.

The protein localises to the cytoplasm. It carries out the reaction N-acetyl-L-glutamate + ATP = N-acetyl-L-glutamyl 5-phosphate + ADP. It participates in amino-acid biosynthesis; L-arginine biosynthesis; N(2)-acetyl-L-ornithine from L-glutamate: step 2/4. Its function is as follows. Catalyzes the ATP-dependent phosphorylation of N-acetyl-L-glutamate. The protein is Acetylglutamate kinase of Thermoanaerobacter pseudethanolicus (strain ATCC 33223 / 39E) (Clostridium thermohydrosulfuricum).